The following is a 569-amino-acid chain: Dolichol kinase EVAN (569 aa).

Residues 1 to 22 (MKTTATSFVTGERVVVFVVVSR) lie on the Cytoplasmic side of the membrane. Residues 23–43 (ILLSLPLSLISHGFSLFLLSL) form a helical membrane-spanning segment. Residues 44 to 67 (SAFLVEIRVETSPFLLSHFSSRRG) are Lumenal-facing. The helical transmembrane segment at 68 to 88 (ASSGILLGAVTLPSVMISKLV) threads the bilayer. The Cytoplasmic portion of the chain corresponds to 89-108 (QLSRAISIHEAEQDELAHVT). The helical transmembrane segment at 109 to 129 (MQYWAASASCCAILIYLSVIM) threads the bilayer. The Lumenal portion of the chain corresponds to 130–147 (SQVRKDESLSSSSIWLTR). Residues 148 to 168 (VSLTGTVLYGVACFVSLSMIS) traverse the membrane as a helical segment. Residues 169–178 (HTGLNTSLKM) are Cytoplasmic-facing. Residues 179-199 (LWMLFHGLAAVKLIRHLLCTF) form a helical membrane-spanning segment. The Lumenal segment spans residues 200 to 207 (PSCASIGE). Residues 208–228 (ALLVTSGLVLYFGDFLACTIA) traverse the membrane as a helical segment. Over 229 to 252 (KIFEKLIPVDLVSISYGIKRTETG) the chain is Cytoplasmic. A helical membrane pass occupies residues 253 to 273 (IIVQGLLLGLLLFPMVFRFVL). The Lumenal portion of the chain corresponds to 274 to 296 (HIYESSLRKRDARQRNCSDAAKS). A glycan (N-linked (GlcNAc...) asparagine) is linked at Asn-289. A helical membrane pass occupies residues 297-317 (VLFFVSLLFFMVVAVPSWMQF). At 318 to 340 (VHDFNQHPFLWVLTFVFSEPLKR) the chain is on the cytoplasmic side. Residues 341–361 (LSLCIYWILLIVVSVSRFYNI) traverse the membrane as a helical segment. The Lumenal segment spans residues 362–369 (SRSSKVER). The chain crosses the membrane as a helical span at residues 370–390 (ILLRKYYHLMAVLMFLPALVL). Topologically, residues 391–393 (QPK) are cytoplasmic. A helical membrane pass occupies residues 394–414 (FLDLAFGAALAVFVALEIIRI). At 415-440 (WRIQPLGEPLHQFMNAFTDHRDSEHL) the chain is on the lumenal side. The helical transmembrane segment at 441 to 461 (IVSHFSLLLGCALPIWMSSGF) threads the bilayer. At 462–464 (NDR) the chain is on the cytoplasmic side. The chain crosses the membrane as a helical span at residues 465-485 (ALSPFAGILSLGIGDTMASMV). At 486–508 (GHKYGVLRWSKTGKKTVEGTAAG) the chain is on the lumenal side. The tract at residues 487–503 (HKYGVLRWSKTGKKTVE) is CTP-binding. The helical transmembrane segment at 509–529 (ITSMMAVCFVLVPILASMGYI) threads the bilayer. Over 530–548 (LSQGWWSLLVAVTATGMLE) the chain is Cytoplasmic. Residues 549-569 (AYTAQLDNAFIPLVFYSLLCL) traverse the membrane as a helical segment.

It belongs to the polyprenol kinase family.

The protein resides in the endoplasmic reticulum membrane. It carries out the reaction a di-trans,poly-cis-dolichol + CTP = a di-trans,poly-cis-dolichyl phosphate + CDP + H(+). In terms of biological role, essential for pollen development. Involved in protein N-glycosylation in the endoplasmic reticulum (ER), especially in the female gametophyte. Mediates pollen tube (PT) reception in synergids through protein glycosylation. This Arabidopsis thaliana (Mouse-ear cress) protein is Dolichol kinase EVAN.